The primary structure comprises 337 residues: Probable RuBisCO transcriptional regulator (337 aa).

The HTH lysR-type domain occupies 6-63; sequence FTLDQLRILKAIAVEGSFKRAADSLYVSQPAVSLQVQNLERQLDVPLFDRGGRRAQLT. The segment at residues 23-42 is a DNA-binding region (H-T-H motif); that stretch reads FKRAADSLYVSQPAVSLQVQ.

It belongs to the LysR transcriptional regulatory family.

Functionally, trans-acting transcriptional regulator of RuBisCO genes (rbcL and rbcS) expression. This Nostoc sp. (strain PCC 7120 / SAG 25.82 / UTEX 2576) protein is Probable RuBisCO transcriptional regulator (rbcR).